The chain runs to 230 residues: Protein FAM3A (230 aa).

Residues 1–33 (MRLAGPLRIVVLVVSVGVTWIVVSILLGGPGSG) form the signal peptide. 2 disulfide bridges follow: cysteine 59/cysteine 87 and cysteine 65/cysteine 222. In terms of domain architecture, GG-type lectin spans 68–226 (EHLAFRVVSG…LEMEGCIPRR (159 aa)).

The protein belongs to the FAM3 family. As to expression, in similar amounts in testis, pancreas, adrenal, placenta, brain, fetal brain, liver, kidney, skeletal muscle and heart.

The protein localises to the secreted. Functionally, may act as a defensin against invading fungal microorganisms. The polypeptide is Protein FAM3A (FAM3A) (Homo sapiens (Human)).